The chain runs to 600 residues: DNA ligase (600 aa).

An ATP-binding site is contributed by D258. K260 acts as the N6-AMP-lysine intermediate in catalysis. Residues R265, R280, E310, F350, R427, and K433 each coordinate ATP.

Belongs to the ATP-dependent DNA ligase family. It depends on Mg(2+) as a cofactor.

The enzyme catalyses ATP + (deoxyribonucleotide)n-3'-hydroxyl + 5'-phospho-(deoxyribonucleotide)m = (deoxyribonucleotide)n+m + AMP + diphosphate.. With respect to regulation, inhibited by PCNA123 and PCNA323. Functionally, DNA ligase that seals nicks in double-stranded DNA during DNA replication, DNA recombination and DNA repair. This chain is DNA ligase, found in Sulfurisphaera tokodaii (strain DSM 16993 / JCM 10545 / NBRC 100140 / 7) (Sulfolobus tokodaii).